Consider the following 134-residue polypeptide: Large ribosomal subunit protein eL14 (134 aa).

Belongs to the eukaryotic ribosomal protein eL14 family. In terms of assembly, component of the large ribosomal subunit (LSU). Mature yeast ribosomes consist of a small (40S) and a large (60S) subunit. The 40S small subunit contains 1 molecule of ribosomal RNA (18S rRNA) and at least 33 different proteins. The large 60S subunit contains 3 rRNA molecules (25S, 5.8S and 5S rRNA) and at least 46 different proteins.

The protein resides in the cytoplasm. The protein localises to the nucleus. Component of the ribosome, a large ribonucleoprotein complex responsible for the synthesis of proteins in the cell. The small ribosomal subunit (SSU) binds messenger RNAs (mRNAs) and translates the encoded message by selecting cognate aminoacyl-transfer RNA (tRNA) molecules. The large subunit (LSU) contains the ribosomal catalytic site termed the peptidyl transferase center (PTC), which catalyzes the formation of peptide bonds, thereby polymerizing the amino acids delivered by tRNAs into a polypeptide chain. The nascent polypeptides leave the ribosome through a tunnel in the LSU and interact with protein factors that function in enzymatic processing, targeting, and the membrane insertion of nascent chains at the exit of the ribosomal tunnel. The protein is Large ribosomal subunit protein eL14 (rpl14) of Schizosaccharomyces pombe (strain 972 / ATCC 24843) (Fission yeast).